Consider the following 385-residue polypeptide: 8-amino-7-oxononanoate synthase (385 aa).

Residue arginine 21 participates in substrate binding. Glycine 108 to phenylalanine 109 is a pyridoxal 5'-phosphate binding site. Histidine 133 is a substrate binding site. Pyridoxal 5'-phosphate-binding residues include serine 179, histidine 207, and threonine 233. The residue at position 236 (lysine 236) is an N6-(pyridoxal phosphate)lysine. Substrate is bound at residue threonine 352.

Belongs to the class-II pyridoxal-phosphate-dependent aminotransferase family. BioF subfamily. In terms of assembly, homodimer. Pyridoxal 5'-phosphate is required as a cofactor.

The enzyme catalyses 6-carboxyhexanoyl-[ACP] + L-alanine + H(+) = (8S)-8-amino-7-oxononanoate + holo-[ACP] + CO2. It functions in the pathway cofactor biosynthesis; biotin biosynthesis. Functionally, catalyzes the decarboxylative condensation of pimeloyl-[acyl-carrier protein] and L-alanine to produce 8-amino-7-oxononanoate (AON), [acyl-carrier protein], and carbon dioxide. This is 8-amino-7-oxononanoate synthase from Salmonella agona (strain SL483).